The primary structure comprises 275 residues: Diaminopimelate epimerase (275 aa).

2 residues coordinate substrate: asparagine 20 and asparagine 63. Cysteine 72 functions as the Proton donor in the catalytic mechanism. Residues 73–74 (GN), asparagine 179, and 197–198 (ER) each bind substrate. Residue cysteine 207 is the Proton acceptor of the active site. 208–209 (GT) is a substrate binding site.

It belongs to the diaminopimelate epimerase family. As to quaternary structure, homodimer.

The protein resides in the cytoplasm. The enzyme catalyses (2S,6S)-2,6-diaminopimelate = meso-2,6-diaminopimelate. It participates in amino-acid biosynthesis; L-lysine biosynthesis via DAP pathway; DL-2,6-diaminopimelate from LL-2,6-diaminopimelate: step 1/1. Functionally, catalyzes the stereoinversion of LL-2,6-diaminopimelate (L,L-DAP) to meso-diaminopimelate (meso-DAP), a precursor of L-lysine and an essential component of the bacterial peptidoglycan. This chain is Diaminopimelate epimerase, found in Chlamydia trachomatis serovar A (strain ATCC VR-571B / DSM 19440 / HAR-13).